The following is a 133-amino-acid chain: Core atranone cluster (CAC) protein 11 (133 aa).

Its pathway is mycotoxin biosynthesis. Functionally, part of the core atranone cluster (CAC) which products are predicted to catalyze most or all steps of mycotoxin atranone synthesis, starting from geranylgeranyl pyrophosphate (GGPP). The initial cyclization of GGPP to dolabellane is probably performed by the terpene cyclase ATR13. The Baeyer-Villiger oxidation near the end of the atranone synthesis, which converts atranones D and E to atranones F and G is predicted to be catalyzed by the monooxygenase ATR8. Of the CAC's other predicted gene products, the reducing PKS ATR6 might synthesize a polyketide chain. This polyketide is probably transferred onto the atranone backbone by the polyketide transferase ATR5. Other predicted CAC products include 4 oxygenases (ATR2, ATR3, ATR4, and ATR14), 3 short-chain reductases (ATR7, ATR9, and ATR10), and a methyltransferase (ATR12). These may all be involved in the various steps of atranone biosynthesis, although their specific roles must await experimental determination. This Stachybotrys chlorohalonatus (strain IBT 40285) protein is Core atranone cluster (CAC) protein 11.